The following is a 332-amino-acid chain: D-lactate dehydrogenase (332 aa).

NAD(+) contacts are provided by residues 155-156 (RI), Asp175, 206-207 (VP), Asn212, and 233-235 (FAR). Residues Arg235 and Glu264 contribute to the active site. His296 functions as the Proton donor in the catalytic mechanism.

It belongs to the D-isomer specific 2-hydroxyacid dehydrogenase family. As to quaternary structure, homodimer.

It catalyses the reaction (R)-lactate + NAD(+) = pyruvate + NADH + H(+). The protein is D-lactate dehydrogenase of Lactiplantibacillus pentosus (Lactobacillus pentosus).